A 291-amino-acid polypeptide reads, in one-letter code: 3-hydroxy-5-phosphonooxypentane-2,4-dione thiolase (291 aa).

Catalysis depends on Lys-203, which acts as the Schiff-base intermediate with substrate.

It belongs to the DeoC/FbaB aldolase family. In terms of assembly, homodecamer.

It is found in the cytoplasm. The enzyme catalyses dihydroxyacetone phosphate + acetyl-CoA = 3-hydroxy-2,4-dioxopentyl phosphate + CoA. In terms of biological role, involved in the degradation of phospho-AI-2, thereby terminating induction of the lsr operon and closing the AI-2 signaling cycle. Catalyzes the transfer of an acetyl moiety from 3-hydroxy-5-phosphonooxypentane-2,4-dione to CoA to form glycerone phosphate and acetyl-CoA. This chain is 3-hydroxy-5-phosphonooxypentane-2,4-dione thiolase, found in Salmonella paratyphi A (strain ATCC 9150 / SARB42).